The sequence spans 612 residues: Phragmoplastin DRP1D (612 aa).

An N-acetylmethionine modification is found at Met1. The region spanning Trp32–Pro301 is the Dynamin-type G domain. The interval Gly42 to Ser49 is G1 motif. Ser45–Ser50 contributes to the GTP binding site. A G2 motif region spans residues Val68 to Arg70. A G3 motif region spans residues Asp143–Gly146. Positions Thr212 to Asp215 are G4 motif. Residues Lys213–Asp218 and Asn243–Gln246 contribute to the GTP site. A G5 motif region spans residues Val242–Ser245. Residues Phe520–Arg612 enclose the GED domain.

This sequence belongs to the TRAFAC class dynamin-like GTPase superfamily. Dynamin/Fzo/YdjA family. As to quaternary structure, forms homodimer and may homooligomerize and heterooligomerize to form the phragmoplastin complex. Binds to PHIP1.

It is found in the cytoplasm. Its subcellular location is the cytoskeleton. The catalysed reaction is GTP + H2O = GDP + phosphate + H(+). Functionally, putative microtubule-associated force-producing protein. Has a GTPase activity. This chain is Phragmoplastin DRP1D, found in Arabidopsis thaliana (Mouse-ear cress).